The chain runs to 690 residues: Elongation factor G (690 aa).

The region spanning 8–282 (ERVRNIGIAA…AVIDYLPAPV (275 aa)) is the tr-type G domain. GTP is bound by residues 17-24 (AHIDAGKT), 81-85 (DTPGH), and 135-138 (NKMD).

It belongs to the TRAFAC class translation factor GTPase superfamily. Classic translation factor GTPase family. EF-G/EF-2 subfamily.

The protein resides in the cytoplasm. In terms of biological role, catalyzes the GTP-dependent ribosomal translocation step during translation elongation. During this step, the ribosome changes from the pre-translocational (PRE) to the post-translocational (POST) state as the newly formed A-site-bound peptidyl-tRNA and P-site-bound deacylated tRNA move to the P and E sites, respectively. Catalyzes the coordinated movement of the two tRNA molecules, the mRNA and conformational changes in the ribosome. The chain is Elongation factor G from Parasynechococcus marenigrum (strain WH8102).